Here is a 1002-residue protein sequence, read N- to C-terminus: Lon protease homolog, mitochondrial (1002 aa).

Residues 102 to 313 (VIALPLPHRP…LTLELVKKEM (212 aa)) enclose the Lon N-terminal domain. ATP is bound at residue 468–475 (GPPGVGKT). Residues 811–995 (QTPVGVVMGL…NEIFDIAFQS (185 aa)) enclose the Lon proteolytic domain. Active-site residues include Ser-901 and Lys-944.

Belongs to the peptidase S16 family. As to quaternary structure, homohexamer or homoheptamer. Organized in a ring with a central cavity.

The protein localises to the mitochondrion matrix. The enzyme catalyses Hydrolysis of proteins in presence of ATP.. In terms of biological role, ATP-dependent serine protease that mediates the selective degradation of misfolded, unassembled or oxidatively damaged polypeptides as well as certain short-lived regulatory proteins in the mitochondrial matrix. May also have a chaperone function in the assembly of inner membrane protein complexes. Participates in the regulation of mitochondrial gene expression and in the maintenance of the integrity of the mitochondrial genome. Binds to mitochondrial DNA in a site-specific manner. This is Lon protease homolog, mitochondrial from Oryza sativa subsp. japonica (Rice).